The primary structure comprises 1843 residues: Zinc finger protein 142 (1843 aa).

2 C2H2-type zinc fingers span residues 103 to 127 and 164 to 186; these read YFCERCEQSFAEPTLLSVHQCTETH and LPCPVCRQEFVQPQALKSHFKIH. Residues 294-357 are disordered; the sequence is PAAKLPPGHR…LEGHVGSGTE (64 aa). Positions 318–329 are enriched in acidic residues; that stretch reads SAEEEDAEEEES. Positions 330 to 340 are enriched in basic and acidic residues; it reads VTQKDSQKVMD. At serine 354 the chain carries Phosphoserine. The C2H2-type 3 zinc finger occupies 363–385; that stretch reads HMCPECKRCFKKRTHLVEHLHLH. A C2H2-type 4; degenerate zinc finger spans residues 391–413; sequence LQCPNCQKFFTSKSKLKTHLLRE. 7 C2H2-type zinc fingers span residues 453 to 475, 543 to 566, 601 to 623, 629 to 651, 657 to 679, 685 to 707, and 744 to 767; these read YACPVCREEFRLSQALKEHLKSH, FHCPHCDFACSNKHLFRKHKKQGH, HQCSECNFATAHKRVLIRHMLLH, HKCELCDFTCRDVSYLSKHMLTH, YMCTECGYVTKWKHYLSVHMRKH, YQCNQCSYRCHRADQLSSHKLRH, and YPCRYCSYQSRHKQALLSHENCKH. Lysine 794 participates in a covalent cross-link: Glycyl lysine isopeptide (Lys-Gly) (interchain with G-Cter in SUMO2). Disordered regions lie at residues 819–888 and 1103–1177; these read QCLA…LGEV and PKPV…TGTS. Basic and acidic residues predominate over residues 837-846; sequence PEREDREHEI. Residues 1157–1167 show a composition bias toward pro residues; the sequence is LPTPSDFPTSP. Residues 1168 to 1177 show a composition bias toward polar residues; it reads PENSLPTGTS. C2H2-type zinc fingers lie at residues 1331–1354, 1388–1411, 1446–1469, 1514–1537, 1608–1630, 1636–1658, 1664–1686, 1692–1715, and 1721–1743; these read LQCGDCGFTCKQSRCLQQHRRLKH, IPCSSCPQTFGTNSKLRLHQLRVH, FSCTQCEAQFSSETALKQHALRRH, LECGACQESFPNRPALDEHRRQHH, YKCTDCAYSTKNRQKITWHSRIH, YHCHLCAYACADPSRLKYHMRIH, YLCPECGYKCKWVNQLKYHMTKH, YQCPECEYCTNRADALRVHRETRH, and FMCEQCGKAFKTRFLLRTHLRKH. Glycyl lysine isopeptide (Lys-Gly) (interchain with G-Cter in SUMO2) cross-links involve residues lysine 1353 and lysine 1402. Lysine 1747 participates in a covalent cross-link: Glycyl lysine isopeptide (Lys-Gly) (interchain with G-Cter in SUMO2). The segment at 1749-1771 adopts a C2H2-type 21 zinc-finger fold; it reads YVCNVCHRAFRWAAGLRHHALTH. Residues 1795 to 1843 form a disordered region; the sequence is HVRRHHPDQADPNQGVGKDPTTPTVHLHDVKLEDPSPPAPPAPSTGPEG. Pro residues predominate over residues 1829–1843; sequence PSPPAPPAPSTGPEG.

This sequence belongs to the krueppel C2H2-type zinc-finger protein family.

The protein localises to the nucleus. Functionally, may be involved in transcriptional regulation. This chain is Zinc finger protein 142, found in Mus musculus (Mouse).